A 277-amino-acid polypeptide reads, in one-letter code: Small ribosomal subunit protein uS2 (277 aa).

Composition is skewed to basic and acidic residues over residues 227-256 (QARA…RTEA) and 267-277 (SEAKAEGNTEA). The disordered stretch occupies residues 227 to 277 (QARAERQEAAAKEAAGDADKAPAEAERTEAPAEEAPAEAQSEAKAEGNTEA).

It belongs to the universal ribosomal protein uS2 family.

This Corynebacterium jeikeium (strain K411) protein is Small ribosomal subunit protein uS2.